The primary structure comprises 203 residues: Probable GTP-binding protein EngB (203 aa).

Positions 1 to 190 constitute an EngB-type G domain; that stretch reads MPEIVLVGRS…LEALQERVRK (190 aa). Residues 8–15, 35–39, 53–56, 132–135, and 169–171 contribute to the GTP site; these read GRSNVGKS, GVTRK, DMPG, NKID, and ISA. Mg(2+)-binding residues include Ser-15 and Thr-37.

It belongs to the TRAFAC class TrmE-Era-EngA-EngB-Septin-like GTPase superfamily. EngB GTPase family. Mg(2+) serves as cofactor.

Necessary for normal cell division and for the maintenance of normal septation. The chain is Probable GTP-binding protein EngB from Methanopyrus kandleri (strain AV19 / DSM 6324 / JCM 9639 / NBRC 100938).